The following is a 235-amino-acid chain: Geranylgeranylglyceryl phosphate synthase (235 aa).

Lys-13 serves as a coordination point for sn-glycerol 1-phosphate. Mg(2+) is bound by residues Asp-15 and Thr-42. Sn-glycerol 1-phosphate contacts are provided by residues 162-167, Gly-192, and 212-213; these read YVEYSG and GD.

Belongs to the GGGP/HepGP synthase family. Group I subfamily. The cofactor is Mg(2+).

The protein resides in the cytoplasm. It catalyses the reaction sn-glycerol 1-phosphate + (2E,6E,10E)-geranylgeranyl diphosphate = sn-3-O-(geranylgeranyl)glycerol 1-phosphate + diphosphate. Its pathway is membrane lipid metabolism; glycerophospholipid metabolism. Prenyltransferase that catalyzes the transfer of the geranylgeranyl moiety of geranylgeranyl diphosphate (GGPP) to the C3 hydroxyl of sn-glycerol-1-phosphate (G1P). This reaction is the first ether-bond-formation step in the biosynthesis of archaeal membrane lipids. This Natronomonas pharaonis (strain ATCC 35678 / DSM 2160 / CIP 103997 / JCM 8858 / NBRC 14720 / NCIMB 2260 / Gabara) (Halobacterium pharaonis) protein is Geranylgeranylglyceryl phosphate synthase.